The chain runs to 296 residues: Formamidopyrimidine-DNA glycosylase (296 aa).

The Schiff-base intermediate with DNA role is filled by proline 2. The active-site Proton donor is the glutamate 3. Catalysis depends on lysine 58, which acts as the Proton donor; for beta-elimination activity. DNA is bound by residues histidine 104, arginine 126, and lysine 169. The FPG-type zinc finger occupies 260–296 (SVYDREGQACGTPGCGGTVARIVQAGRSTFYCAACQK). Arginine 286 acts as the Proton donor; for delta-elimination activity in catalysis.

It belongs to the FPG family. Monomer. Requires Zn(2+) as cofactor.

It catalyses the reaction Hydrolysis of DNA containing ring-opened 7-methylguanine residues, releasing 2,6-diamino-4-hydroxy-5-(N-methyl)formamidopyrimidine.. The enzyme catalyses 2'-deoxyribonucleotide-(2'-deoxyribose 5'-phosphate)-2'-deoxyribonucleotide-DNA = a 3'-end 2'-deoxyribonucleotide-(2,3-dehydro-2,3-deoxyribose 5'-phosphate)-DNA + a 5'-end 5'-phospho-2'-deoxyribonucleoside-DNA + H(+). Functionally, involved in base excision repair of DNA damaged by oxidation or by mutagenic agents. Acts as a DNA glycosylase that recognizes and removes damaged bases. Has a preference for oxidized purines, such as 7,8-dihydro-8-oxoguanine (8-oxoG). Has AP (apurinic/apyrimidinic) lyase activity and introduces nicks in the DNA strand. Cleaves the DNA backbone by beta-delta elimination to generate a single-strand break at the site of the removed base with both 3'- and 5'-phosphates. In Rhizobium etli (strain CIAT 652), this protein is Formamidopyrimidine-DNA glycosylase.